A 212-amino-acid chain; its full sequence is Transcription factor MYB8 (212 aa).

HTH myb-type domains follow at residues 9 to 61 and 62 to 116; these read KAHM…INYL and RPDL…KRKL. 2 consecutive DNA-binding regions (H-T-H motif) follow at residues 37–61 and 89–112; these read WRSLPKSVGLLRCGKSCRLRWINYL and WSLIAGKLPGRTDNEIKNYWNTHI.

The protein localises to the nucleus. Its function is as follows. Transcription activator. The polypeptide is Transcription factor MYB8 (Arabidopsis thaliana (Mouse-ear cress)).